The chain runs to 178 residues: Zinc finger CCHC domain-containing protein 10 (178 aa).

The segment at Val-21–Gly-38 adopts a CCHC-type zinc-finger fold. The disordered stretch occupies residues Gln-66–Lys-178. Low complexity-rich tracts occupy residues Ser-85–Ser-113 and Ser-121–Ser-164.

This Mus musculus (Mouse) protein is Zinc finger CCHC domain-containing protein 10 (Zcchc10).